A 60-amino-acid polypeptide reads, in one-letter code: Large ribosomal subunit protein bL32 (60 aa).

Residues 1 to 23 are disordered; the sequence is MAVPKRKKSKSRRNMHRSHHAIK.

This sequence belongs to the bacterial ribosomal protein bL32 family.

The protein is Large ribosomal subunit protein bL32 of Wolbachia pipientis subsp. Culex pipiens (strain wPip).